We begin with the raw amino-acid sequence, 1025 residues long: Retrovirus-related Pol polyprotein from type-1 retrotransposable element R2 (1025 aa).

Residues 1–11 (NQIKKSNTSTG) are compositionally biased toward polar residues. Positions 1-38 (NQIKKSNTSTGARIPKAMTNPADNFAGGQWKPPGRRSA) are disordered. A C2H2-type zinc finger spans residues 46-69 (FVCEHCLRAFTTNTGRGLHIKRAH). A compositionally biased stretch (basic and acidic residues) spans 146–158 (NRARETELTRLET). A disordered region spans residues 146-172 (NRARETELTRLETADEDPASQEQDNPN). The region spanning 358–635 (MIMYHGQCPR…DQWKYLGVVY (278 aa)) is the Reverse transcriptase domain. Residues 755 to 1025 (SLLGGDWVAE…YRTERRRTAN (271 aa)) are nucleic acid-binding endonuclease.

It catalyses the reaction DNA(n) + a 2'-deoxyribonucleoside 5'-triphosphate = DNA(n+1) + diphosphate. The sequence is that of Retrovirus-related Pol polyprotein from type-1 retrotransposable element R2 from Nasonia vitripennis (Parasitic wasp).